Consider the following 430-residue polypeptide: Enolase (430 aa).

A (2R)-2-phosphoglycerate-binding site is contributed by glutamine 168. The Proton donor role is filled by glutamate 210. 3 residues coordinate Mg(2+): aspartate 247, glutamate 288, and aspartate 315. Residues lysine 340, arginine 369, serine 370, and lysine 391 each coordinate (2R)-2-phosphoglycerate. The active-site Proton acceptor is the lysine 340.

This sequence belongs to the enolase family. Mg(2+) is required as a cofactor.

The protein resides in the cytoplasm. The protein localises to the secreted. Its subcellular location is the cell surface. It catalyses the reaction (2R)-2-phosphoglycerate = phosphoenolpyruvate + H2O. Its pathway is carbohydrate degradation; glycolysis; pyruvate from D-glyceraldehyde 3-phosphate: step 4/5. Functionally, catalyzes the reversible conversion of 2-phosphoglycerate (2-PG) into phosphoenolpyruvate (PEP). It is essential for the degradation of carbohydrates via glycolysis. In Rippkaea orientalis (strain PCC 8801 / RF-1) (Cyanothece sp. (strain PCC 8801)), this protein is Enolase.